A 471-amino-acid polypeptide reads, in one-letter code: Alpha-amylase (471 aa).

Residue Gln1 is modified to Pyrrolidone carboxylic acid. A disulfide bridge links Cys28 with Cys84. Ca(2+) is bound by residues Asn98, Arg146, and Asp155. Cys134 and Cys148 are oxidised to a cystine. Arg183 serves as a coordination point for chloride. The active-site Nucleophile is Asp185. His189 is a binding site for Ca(2+). Glu222 (proton donor) is an active-site residue. Asn285 and Arg321 together coordinate chloride. A compositionally biased stretch (polar residues) spans 326–343 (FDFTDNDQGPPQDGSGNL). The tract at residues 326–346 (FDFTDNDQGPPQDGSGNLISP) is disordered. 2 disulfides stabilise this stretch: Cys354–Cys360 and Cys425–Cys437.

It belongs to the glycosyl hydrolase 13 family. As to quaternary structure, monomer. Ca(2+) serves as cofactor. It depends on chloride as a cofactor.

It catalyses the reaction Endohydrolysis of (1-&gt;4)-alpha-D-glucosidic linkages in polysaccharides containing three or more (1-&gt;4)-alpha-linked D-glucose units.. The chain is Alpha-amylase from Tenebrio molitor (Yellow mealworm beetle).